A 108-amino-acid polypeptide reads, in one-letter code: Cytochrome c oxidase subunit 1 (108 aa).

Residues 10-30 (AFVAPVLGLLGFIPGGAGGIV) traverse the membrane as a helical segment. Position 49 (histidine 49) interacts with heme a3. 2 consecutive transmembrane segments (helical) span residues 50–70 (FHLQVASLVTLTAMGSLYWLL) and 85–105 (LGLAVVWLWFLGMMIMAVGLH). Residue histidine 51 participates in Fe(II)-heme a binding.

This sequence belongs to the heme-copper respiratory oxidase family. Requires heme as cofactor. The cofactor is Cu cation.

The protein resides in the cell membrane. The enzyme catalyses 4 Fe(II)-[cytochrome c] + O2 + 8 H(+)(in) = 4 Fe(III)-[cytochrome c] + 2 H2O + 4 H(+)(out). It functions in the pathway energy metabolism; oxidative phosphorylation. The sequence is that of Cytochrome c oxidase subunit 1 (cbaA) from Thermus thermophilus.